We begin with the raw amino-acid sequence, 122 residues long: Large ribosomal subunit protein uL24 (122 aa).

The protein belongs to the universal ribosomal protein uL24 family. As to quaternary structure, part of the 50S ribosomal subunit.

Its function is as follows. One of two assembly initiator proteins, it binds directly to the 5'-end of the 23S rRNA, where it nucleates assembly of the 50S subunit. In terms of biological role, one of the proteins that surrounds the polypeptide exit tunnel on the outside of the subunit. This chain is Large ribosomal subunit protein uL24, found in Renibacterium salmoninarum (strain ATCC 33209 / DSM 20767 / JCM 11484 / NBRC 15589 / NCIMB 2235).